The following is a 336-amino-acid chain: Cell division protein ZipA (336 aa).

At 1–6 (MMQDLR) the chain is on the periplasmic side. The chain crosses the membrane as a helical span at residues 7-27 (LILIVVGAIAIIALLLHGLWT). The Cytoplasmic portion of the chain corresponds to 28 to 336 (SRKERSSLFR…RIRDVLKANA (309 aa)). Residues 40–51 (PVKRAKKARDET) show a composition bias toward basic and acidic residues. The interval 40 to 190 (PVKRAKKARD…APAQPQQPAE (151 aa)) is disordered. Low complexity predominate over residues 76–89 (SFSSSSFDNASFDN). Positions 126–138 (PRSQVRGDSNPQV) are enriched in polar residues. Over residues 179–190 (QPAPAQPQQPAE) the composition is skewed to low complexity.

This sequence belongs to the ZipA family. As to quaternary structure, interacts with FtsZ via their C-terminal domains.

The protein resides in the cell inner membrane. Essential cell division protein that stabilizes the FtsZ protofilaments by cross-linking them and that serves as a cytoplasmic membrane anchor for the Z ring. Also required for the recruitment to the septal ring of downstream cell division proteins. This chain is Cell division protein ZipA, found in Pectobacterium carotovorum subsp. carotovorum (strain PC1).